A 599-amino-acid chain; its full sequence is Elongation factor 4 (599 aa).

Positions 2 to 184 (KHIRNFSIIA…RLVRDIPAPE (183 aa)) constitute a tr-type G domain. GTP-binding positions include 14–19 (DHGKST) and 131–134 (NKID).

The protein belongs to the TRAFAC class translation factor GTPase superfamily. Classic translation factor GTPase family. LepA subfamily.

The protein resides in the cell inner membrane. The enzyme catalyses GTP + H2O = GDP + phosphate + H(+). In terms of biological role, required for accurate and efficient protein synthesis under certain stress conditions. May act as a fidelity factor of the translation reaction, by catalyzing a one-codon backward translocation of tRNAs on improperly translocated ribosomes. Back-translocation proceeds from a post-translocation (POST) complex to a pre-translocation (PRE) complex, thus giving elongation factor G a second chance to translocate the tRNAs correctly. Binds to ribosomes in a GTP-dependent manner. In Yersinia pestis bv. Antiqua (strain Antiqua), this protein is Elongation factor 4.